We begin with the raw amino-acid sequence, 456 residues long: Antizyme inhibitor 2 (456 aa).

Residue Cys357 is the Proton donor; shared with dimeric partner of the active site.

Belongs to the Orn/Lys/Arg decarboxylase class-II family. ODC antizyme inhibitor subfamily. Monomer. Interacts with OAZ1; this interaction disrupts the interaction between the antizyme and ODC1. Does not form a heterodimer with ODC1.

The protein localises to the nucleus. Its subcellular location is the cytoplasm. It localises to the perinuclear region. The protein resides in the membrane. It is found in the cytoplasmic vesicle. The protein localises to the endoplasmic reticulum-Golgi intermediate compartment. Its subcellular location is the golgi apparatus. It localises to the cis-Golgi network. The protein resides in the trans-Golgi network. It is found in the cytoplasmic granule. The protein localises to the cell projection. Its subcellular location is the axon. It localises to the dendrite. The protein resides in the perikaryon. In terms of biological role, antizyme inhibitor (AZI) protein that positively regulates ornithine decarboxylase (ODC) activity and polyamine uptake. AZI is an enzymatically inactive ODC homolog that counteracts the negative effect of ODC antizyme (AZ) on ODC activity by competing with ODC for antizyme-binding. Inhibits antizyme-dependent ODC degradation and releases ODC monomers from their inactive complex with antizymes, leading to formation of the catalytically active ODC homodimer and restoring polyamine production. Participates in the morphological integrity of the trans-Golgi network (TGN) and functions as a regulator of intracellular secretory vesicle trafficking. The chain is Antizyme inhibitor 2 (azin2) from Xenopus laevis (African clawed frog).